The primary structure comprises 266 residues: UPF0354 protein lin1649 (266 aa).

Belongs to the UPF0354 family.

The protein is UPF0354 protein lin1649 of Listeria innocua serovar 6a (strain ATCC BAA-680 / CLIP 11262).